The following is a 331-amino-acid chain: Holliday junction branch migration complex subunit RuvB (331 aa).

The tract at residues 1 to 171 (MTEPLDAALR…FGIIEHLEYY (171 aa)) is large ATPase domain (RuvB-L). ATP is bound by residues Leu-9, Arg-10, Gly-51, Lys-54, Thr-55, Thr-56, 118-120 (EDF), Arg-161, Tyr-171, and Arg-208. Thr-55 contributes to the Mg(2+) binding site. The tract at residues 172-242 (TPEEIGTNLL…RAQDALDKLG (71 aa)) is small ATPAse domain (RuvB-S). A head domain (RuvB-H) region spans residues 245–331 (TAGLDERDKK…AESDLGLYTN (87 aa)). DNA is bound by residues Arg-300 and Arg-305.

The protein belongs to the RuvB family. In terms of assembly, homohexamer. Forms an RuvA(8)-RuvB(12)-Holliday junction (HJ) complex. HJ DNA is sandwiched between 2 RuvA tetramers; dsDNA enters through RuvA and exits via RuvB. An RuvB hexamer assembles on each DNA strand where it exits the tetramer. Each RuvB hexamer is contacted by two RuvA subunits (via domain III) on 2 adjacent RuvB subunits; this complex drives branch migration. In the full resolvosome a probable DNA-RuvA(4)-RuvB(12)-RuvC(2) complex forms which resolves the HJ.

Its subcellular location is the cytoplasm. It carries out the reaction ATP + H2O = ADP + phosphate + H(+). The RuvA-RuvB-RuvC complex processes Holliday junction (HJ) DNA during genetic recombination and DNA repair, while the RuvA-RuvB complex plays an important role in the rescue of blocked DNA replication forks via replication fork reversal (RFR). RuvA specifically binds to HJ cruciform DNA, conferring on it an open structure. The RuvB hexamer acts as an ATP-dependent pump, pulling dsDNA into and through the RuvAB complex. RuvB forms 2 homohexamers on either side of HJ DNA bound by 1 or 2 RuvA tetramers; 4 subunits per hexamer contact DNA at a time. Coordinated motions by a converter formed by DNA-disengaged RuvB subunits stimulates ATP hydrolysis and nucleotide exchange. Immobilization of the converter enables RuvB to convert the ATP-contained energy into a lever motion, pulling 2 nucleotides of DNA out of the RuvA tetramer per ATP hydrolyzed, thus driving DNA branch migration. The RuvB motors rotate together with the DNA substrate, which together with the progressing nucleotide cycle form the mechanistic basis for DNA recombination by continuous HJ branch migration. Branch migration allows RuvC to scan DNA until it finds its consensus sequence, where it cleaves and resolves cruciform DNA. The polypeptide is Holliday junction branch migration complex subunit RuvB (Deinococcus geothermalis (strain DSM 11300 / CIP 105573 / AG-3a)).